Consider the following 185-residue polypeptide: uncharacterized protein (185 aa).

This is an uncharacterized protein from Haemophilus influenzae (strain ATCC 51907 / DSM 11121 / KW20 / Rd).